The chain runs to 76 residues: Alpha/kappa-conotoxin-like pl14.3 (76 aa).

An N-terminal signal peptide occupies residues 1-27 (MPSVRSVACCCLLWMMLSVQLVTPGSP). A propeptide spanning residues 28–39 (ATAQLSGQRTAR) is cleaved from the precursor. 2 disulfides stabilise this stretch: cysteine 46-cysteine 61 and cysteine 50-cysteine 63. Aspartate 64 is subject to Aspartic acid 1-amide. Positions 65–76 (GKRDVVSSSMAV) are excised as a propeptide.

This sequence belongs to the conotoxin J superfamily. Expressed by the venom duct.

Its subcellular location is the secreted. Its function is as follows. Highly inhibits both nicotinic acetylcholine receptors (neuronal (alpha-3/beta-4) and muscular (alpha-1/beta-1/epsilon/delta) subtypes) and the voltage-gated potassium channel Kv1.6/KCNA6 subtype. The sequence is that of Alpha/kappa-conotoxin-like pl14.3 from Conus planorbis (Planorbis cone).